The primary structure comprises 192 residues: Glycerol-3-phosphate acyltransferase (192 aa).

Helical transmembrane passes span 4–24 (MFWL…AILL), 54–74 (LAIL…LIAS), 80–100 (IAQQ…PVYF), 112–132 (AGVL…AWLL), and 154–174 (LLAW…LLIV).

It belongs to the PlsY family. In terms of assembly, probably interacts with PlsX.

It is found in the cell inner membrane. It catalyses the reaction an acyl phosphate + sn-glycerol 3-phosphate = a 1-acyl-sn-glycero-3-phosphate + phosphate. The protein operates within lipid metabolism; phospholipid metabolism. In terms of biological role, catalyzes the transfer of an acyl group from acyl-phosphate (acyl-PO(4)) to glycerol-3-phosphate (G3P) to form lysophosphatidic acid (LPA). This enzyme utilizes acyl-phosphate as fatty acyl donor, but not acyl-CoA or acyl-ACP. This is Glycerol-3-phosphate acyltransferase from Pseudomonas savastanoi pv. phaseolicola (strain 1448A / Race 6) (Pseudomonas syringae pv. phaseolicola (strain 1448A / Race 6)).